A 174-amino-acid polypeptide reads, in one-letter code: Cuticle protein 1 (174 aa).

Positions 1-18 (MRFLIAFVAILGYASASA) are cleaved as a signal peptide.

Its subcellular location is the secreted. The protein is Cuticle protein 1 of Lonomia obliqua (Moth).